A 102-amino-acid polypeptide reads, in one-letter code: ATP-dependent Clp protease adapter protein ClpS (102 aa).

The protein belongs to the ClpS family. In terms of assembly, binds to the N-terminal domain of the chaperone ClpA.

Functionally, involved in the modulation of the specificity of the ClpAP-mediated ATP-dependent protein degradation. The chain is ATP-dependent Clp protease adapter protein ClpS from Shewanella putrefaciens (strain CN-32 / ATCC BAA-453).